Reading from the N-terminus, the 628-residue chain is Glutamyl-tRNA(Gln) amidotransferase subunit E (628 aa).

It belongs to the GatB/GatE family. GatE subfamily. Heterodimer of GatD and GatE.

It carries out the reaction L-glutamyl-tRNA(Gln) + L-glutamine + ATP + H2O = L-glutaminyl-tRNA(Gln) + L-glutamate + ADP + phosphate + H(+). Its function is as follows. Allows the formation of correctly charged Gln-tRNA(Gln) through the transamidation of misacylated Glu-tRNA(Gln) in organisms which lack glutaminyl-tRNA synthetase. The reaction takes place in the presence of glutamine and ATP through an activated gamma-phospho-Glu-tRNA(Gln). The GatDE system is specific for glutamate and does not act on aspartate. This chain is Glutamyl-tRNA(Gln) amidotransferase subunit E, found in Thermococcus gammatolerans (strain DSM 15229 / JCM 11827 / EJ3).